The primary structure comprises 670 residues: MEVPAKIQKRIERLRQEINDHNYRYYVLSQPTIPDSVYDELFHELQKLEKKYPETITPSSPTQRVGAEPLKVFEPVHHEIPMLSLDNVFDEKGLRAFDKRIRQRLKLDKPFEYVCEPKMDGVALSLLYENGELIRAATRGDGYTGENVTQNTRTIASVPLQLRGNDYPELVEIRGEVLMPREGFAKFNREAEKRGDKTFANPRNAASGSLRQLDPRITAKRPLIFYGYLIGLLKGKDFPKNHCDVLKWFKDWGIPVISEIKVVGGIEGCLDYYEHLVKTREKMPFDIDGIVIKVNSLQVQAELGFVSRAPRWAIAYKFPAQEKMTVVKAIEFQVGRTGVVTPVARLEPVSVSGVTVSNATLHNFDELYRKDVRVGDTVIVRRAGDVIPEVVGPILAKRPKKAKLIKIPSRCPVCHAEVIKPEGEAVARCVGGLYCRAQLRESIKHFASRRALDIEGLGDKLVELFIQEKLIKDITGIYQLKKSAITALPRMGEKSAENLLTAIEKSKKTTLPRFLYALGIRGVGDTIARTLARHFHELDLLMKASIETLQEIRDIGPVVAENIHAFFHQKHNAELINKLIHLGVHWPQEKAVVKSEIAGKTFVLTGALKSLTREEAEEKIERSGGKATSSVSKNTDYVIVGENPGSKYEKAKALGISLIDEEAFLKLLKS.

Residues 35–39 (DSVYD), 84–85 (SL), and glutamate 116 contribute to the NAD(+) site. Lysine 118 serves as the catalytic N6-AMP-lysine intermediate. Residues arginine 139, glutamate 176, lysine 293, and lysine 317 each coordinate NAD(+). Zn(2+) contacts are provided by cysteine 411, cysteine 414, cysteine 429, and cysteine 435. Residues 592 to 670 (VVKSEIAGKT…EEAFLKLLKS (79 aa)) enclose the BRCT domain.

Belongs to the NAD-dependent DNA ligase family. LigA subfamily. The cofactor is Mg(2+). Requires Mn(2+) as cofactor.

The enzyme catalyses NAD(+) + (deoxyribonucleotide)n-3'-hydroxyl + 5'-phospho-(deoxyribonucleotide)m = (deoxyribonucleotide)n+m + AMP + beta-nicotinamide D-nucleotide.. In terms of biological role, DNA ligase that catalyzes the formation of phosphodiester linkages between 5'-phosphoryl and 3'-hydroxyl groups in double-stranded DNA using NAD as a coenzyme and as the energy source for the reaction. It is essential for DNA replication and repair of damaged DNA. The protein is DNA ligase of Coxiella burnetii (strain Dugway 5J108-111).